Reading from the N-terminus, the 511-residue chain is Apolipoprotein N-acyltransferase (511 aa).

6 helical membrane passes run 7–29 (PGWPGHLLALAAGALTPLALAPF), 58–78 (GWWYGFGAFGAGTSWIYVSIH), 90–110 (LLMLGFTAGVAFFFALPAWLW), 125–145 (LAFAALWLALELFRSWFLTGF), 163–183 (VPVGGVWLSSFVIALSAALLV), and 192–212 (GASLLLGLVLLLGPWAAGLYL). In terms of domain architecture, CN hydrolase spans 230-470 (IQGNIAQELK…QGILRGEVIP (241 aa)). Residue glutamate 269 is the Proton acceptor of the active site. Lysine 330 is a catalytic residue. Catalysis depends on cysteine 382, which acts as the Nucleophile. Residues 482–502 (VWPLAGLAGVLLLWALLGRQL) form a helical membrane-spanning segment.

The protein belongs to the CN hydrolase family. Apolipoprotein N-acyltransferase subfamily.

The protein localises to the cell inner membrane. It catalyses the reaction N-terminal S-1,2-diacyl-sn-glyceryl-L-cysteinyl-[lipoprotein] + a glycerophospholipid = N-acyl-S-1,2-diacyl-sn-glyceryl-L-cysteinyl-[lipoprotein] + a 2-acyl-sn-glycero-3-phospholipid + H(+). Its pathway is protein modification; lipoprotein biosynthesis (N-acyl transfer). Catalyzes the phospholipid dependent N-acylation of the N-terminal cysteine of apolipoprotein, the last step in lipoprotein maturation. In Pseudomonas aeruginosa (strain ATCC 15692 / DSM 22644 / CIP 104116 / JCM 14847 / LMG 12228 / 1C / PRS 101 / PAO1), this protein is Apolipoprotein N-acyltransferase.